A 234-amino-acid chain; its full sequence is 7-carboxy-7-deazaguanine synthase (234 aa).

Residues 1–28 are disordered; that stretch reads MPLNCDTKTAGEISSSIPSGSGSHQPAA. The span at 13–23 shows a compositional bias: low complexity; the sequence is ISSSIPSGSGS. Substrate contacts are provided by residues 42 to 44 and Arg57; that span reads LQG. Residues 48 to 234 form the Radical SAM core domain; sequence TSGYPTIFIR…LQLHKFIGLP (187 aa). [4Fe-4S] cluster-binding residues include Cys61, Cys65, and Cys68. Residue Thr70 participates in Mg(2+) binding. Thr100 is a binding site for substrate. S-adenosyl-L-methionine is bound at residue Gly102. Substrate is bound at residue Pro234.

The protein belongs to the radical SAM superfamily. 7-carboxy-7-deazaguanine synthase family. In terms of assembly, homodimer. [4Fe-4S] cluster is required as a cofactor. Requires S-adenosyl-L-methionine as cofactor. Mg(2+) serves as cofactor.

It catalyses the reaction 6-carboxy-5,6,7,8-tetrahydropterin + H(+) = 7-carboxy-7-deazaguanine + NH4(+). Its pathway is purine metabolism; 7-cyano-7-deazaguanine biosynthesis. Catalyzes the complex heterocyclic radical-mediated conversion of 6-carboxy-5,6,7,8-tetrahydropterin (CPH4) to 7-carboxy-7-deazaguanine (CDG), a step common to the biosynthetic pathways of all 7-deazapurine-containing compounds. The polypeptide is 7-carboxy-7-deazaguanine synthase (Methanospirillum hungatei JF-1 (strain ATCC 27890 / DSM 864 / NBRC 100397 / JF-1)).